The primary structure comprises 560 residues: Oxygen-dependent choline dehydrogenase (560 aa).

8–37 (DYIIIGAGSAGNVLATRLTEDADVSVLLLE) lines the FAD pocket. Residue histidine 475 is the Proton acceptor of the active site.

It belongs to the GMC oxidoreductase family. FAD serves as cofactor.

It carries out the reaction choline + A = betaine aldehyde + AH2. The catalysed reaction is betaine aldehyde + NAD(+) + H2O = glycine betaine + NADH + 2 H(+). Its pathway is amine and polyamine biosynthesis; betaine biosynthesis via choline pathway; betaine aldehyde from choline (cytochrome c reductase route): step 1/1. In terms of biological role, involved in the biosynthesis of the osmoprotectant glycine betaine. Catalyzes the oxidation of choline to betaine aldehyde and betaine aldehyde to glycine betaine at the same rate. This is Oxygen-dependent choline dehydrogenase from Stenotrophomonas maltophilia (strain K279a).